Here is a 454-residue protein sequence, read N- to C-terminus: CBL-interacting protein kinase 17 (454 aa).

Residues 13-268 (YEMGRTLGEG…MAGIKSHEWF (256 aa)) form the Protein kinase domain. Residues 19-27 (LGEGNFGKV) and Lys42 each bind ATP. Asp136 functions as the Proton acceptor in the catalytic mechanism. The segment at 154–183 (DFGLSALPQHLGNDGLLHTTCGSPNYIAPE) is activation loop. Residues 304 to 328 (KNSHQINAFQLIGMASSLDLSGFFE) enclose the NAF domain. The segment at 334–363 (QRRIRFTSTHPPKDAFDKIESSATELGFQV) is PPI.

The protein belongs to the protein kinase superfamily. CAMK Ser/Thr protein kinase family. SNF1 subfamily. The cofactor is Mn(2+).

It catalyses the reaction L-seryl-[protein] + ATP = O-phospho-L-seryl-[protein] + ADP + H(+). The catalysed reaction is L-threonyl-[protein] + ATP = O-phospho-L-threonyl-[protein] + ADP + H(+). Its function is as follows. CIPK serine-threonine protein kinases interact with CBL proteins. Binding of a CBL protein to the regulatory NAF domain of CIPK protein lead to the activation of the kinase in a calcium-dependent manner. The polypeptide is CBL-interacting protein kinase 17 (CIPK17) (Oryza sativa subsp. japonica (Rice)).